A 160-amino-acid chain; its full sequence is 6,7-dimethyl-8-ribityllumazine synthase (160 aa).

Residues Trp27, Ala59–Glu61, and Val81–Ile83 each bind 5-amino-6-(D-ribitylamino)uracil. Gln86–Thr87 is a binding site for (2S)-2-hydroxy-3-oxobutyl phosphate. His89 functions as the Proton donor in the catalytic mechanism. Asn114 is a 5-amino-6-(D-ribitylamino)uracil binding site. Arg128 serves as a coordination point for (2S)-2-hydroxy-3-oxobutyl phosphate.

This sequence belongs to the DMRL synthase family. As to quaternary structure, homopentamer.

It catalyses the reaction (2S)-2-hydroxy-3-oxobutyl phosphate + 5-amino-6-(D-ribitylamino)uracil = 6,7-dimethyl-8-(1-D-ribityl)lumazine + phosphate + 2 H2O + H(+). It participates in cofactor biosynthesis; riboflavin biosynthesis; riboflavin from 2-hydroxy-3-oxobutyl phosphate and 5-amino-6-(D-ribitylamino)uracil: step 1/2. Catalyzes the formation of 6,7-dimethyl-8-ribityllumazine by condensation of 5-amino-6-(D-ribitylamino)uracil with 3,4-dihydroxy-2-butanone 4-phosphate. This is the penultimate step in the biosynthesis of riboflavin. This Mycobacterium tuberculosis (strain CDC 1551 / Oshkosh) protein is 6,7-dimethyl-8-ribityllumazine synthase (ribH).